The sequence spans 276 residues: Undecaprenyl-diphosphatase (276 aa).

The next 6 membrane-spanning stretches (helical) occupy residues Arg-43–Phe-63, Leu-85–Ile-105, Leu-109–Ala-129, Ala-183–Ser-203, Val-218–Leu-238, and Ile-254–Ala-274.

Belongs to the UppP family.

The protein resides in the cell inner membrane. It catalyses the reaction di-trans,octa-cis-undecaprenyl diphosphate + H2O = di-trans,octa-cis-undecaprenyl phosphate + phosphate + H(+). In terms of biological role, catalyzes the dephosphorylation of undecaprenyl diphosphate (UPP). Confers resistance to bacitracin. This chain is Undecaprenyl-diphosphatase, found in Pseudomonas syringae pv. syringae (strain B728a).